Consider the following 329-residue polypeptide: Ribosomal protein L11 methyltransferase (329 aa).

Residues threonine 177, glycine 198, aspartate 220, and asparagine 264 each coordinate S-adenosyl-L-methionine.

The protein belongs to the methyltransferase superfamily. PrmA family.

Its subcellular location is the cytoplasm. It catalyses the reaction L-lysyl-[protein] + 3 S-adenosyl-L-methionine = N(6),N(6),N(6)-trimethyl-L-lysyl-[protein] + 3 S-adenosyl-L-homocysteine + 3 H(+). Functionally, methylates ribosomal protein L11. This is Ribosomal protein L11 methyltransferase from Helicobacter pylori (strain HPAG1).